The following is a 164-amino-acid chain: Ribosome maturation factor RimP (164 aa).

This sequence belongs to the RimP family.

The protein localises to the cytoplasm. Required for maturation of 30S ribosomal subunits. The polypeptide is Ribosome maturation factor RimP (Mycoplasma mycoides subsp. mycoides SC (strain CCUG 32753 / NCTC 10114 / PG1)).